The chain runs to 291 residues: Proteasome subunit beta (291 aa).

A propeptide spans 1–57 (removed in mature form; by autocatalysis); sequence MTWPLPDRLSINSLSGTPAVDLSSFTDFLRRQAPELLPASISGGAPLAGGDAQLPHG. The Nucleophile role is filled by T58.

It belongs to the peptidase T1B family. In terms of assembly, the 20S proteasome core is composed of 14 alpha and 14 beta subunits that assemble into four stacked heptameric rings, resulting in a barrel-shaped structure. The two inner rings, each composed of seven catalytic beta subunits, are sandwiched by two outer rings, each composed of seven alpha subunits. The catalytic chamber with the active sites is on the inside of the barrel. Has a gated structure, the ends of the cylinder being occluded by the N-termini of the alpha-subunits. Is capped by the proteasome-associated ATPase, ARC.

The protein resides in the cytoplasm. The enzyme catalyses Cleavage of peptide bonds with very broad specificity.. It functions in the pathway protein degradation; proteasomal Pup-dependent pathway. The formation of the proteasomal ATPase ARC-20S proteasome complex, likely via the docking of the C-termini of ARC into the intersubunit pockets in the alpha-rings, may trigger opening of the gate for substrate entry. Interconversion between the open-gate and close-gate conformations leads to a dynamic regulation of the 20S proteasome proteolysis activity. Functionally, component of the proteasome core, a large protease complex with broad specificity involved in protein degradation. This is Proteasome subunit beta from Mycobacterium tuberculosis (strain ATCC 25177 / H37Ra).